The primary structure comprises 401 residues: Sorting nexin-4 (401 aa).

Residues 17–139 form the PX domain; it reads FLQCLVTEPR…AFLENPNWNN (123 aa). A 1,2-diacyl-sn-glycero-3-phospho-(1D-myo-inositol-3-phosphate) contacts are provided by R60, S62, K86, and R105. S62 carries the post-translational modification Phosphoserine. Residues 190 to 292 are a coiled coil; that stretch reads ISNLEGSIQK…DVEALQEYSA (103 aa).

Belongs to the sorting nexin family.

It is found in the cytoplasm. The protein localises to the cytosol. Its subcellular location is the preautophagosomal structure membrane. The protein resides in the endosome membrane. Its function is as follows. Sorting nexin, involved in the separation or division of vacuoles throughout the entire life cycle of the cells. Involved in retrieval of late-Golgi SNAREs from post-Golgi endosomes to the trans-Golgi network, for cytoplasm to vacuole transport (Cvt), and autophagy of large cargos including mitophagy, pexophagy and glycophagy. This is Sorting nexin-4 (snx4) from Schizosaccharomyces pombe (strain 972 / ATCC 24843) (Fission yeast).